The sequence spans 366 residues: Histidinol-phosphate aminotransferase 2 (366 aa).

Positions Met1 to Gln11 are enriched in polar residues. Residues Met1–Gln21 form a disordered region. Lys222 carries the N6-(pyridoxal phosphate)lysine modification.

Belongs to the class-II pyridoxal-phosphate-dependent aminotransferase family. Histidinol-phosphate aminotransferase subfamily. As to quaternary structure, homodimer. It depends on pyridoxal 5'-phosphate as a cofactor.

It catalyses the reaction L-histidinol phosphate + 2-oxoglutarate = 3-(imidazol-4-yl)-2-oxopropyl phosphate + L-glutamate. It functions in the pathway amino-acid biosynthesis; L-histidine biosynthesis; L-histidine from 5-phospho-alpha-D-ribose 1-diphosphate: step 7/9. This Bacillus cereus (strain ATCC 10987 / NRS 248) protein is Histidinol-phosphate aminotransferase 2.